Consider the following 522-residue polypeptide: DEP domain-containing protein 7 (522 aa).

Residues 46–138 enclose the DEP domain; sequence LYTQVEVKKR…SSCSLYRFLN (93 aa).

The protein belongs to the DEPDC7 family.

This Xenopus laevis (African clawed frog) protein is DEP domain-containing protein 7 (depdc7).